Here is a 694-residue protein sequence, read N- to C-terminus: Transcription activator of gluconeogenesis Pc22g08580 (694 aa).

The disordered stretch occupies residues 1-61 (MNMETKNGSP…DPSRPRRKKA (61 aa)). Basic and acidic residues predominate over residues 17–55 (SGERDSADITEHEQMDVKPKTNGDSKADRKAANAKDPSR). The zn(2)-C6 fungal-type DNA-binding region spans 65-93 (CFACQRAHLTCGDERPCQRCIKRGLQDAC). 3 disordered regions span residues 126–240 (TLRN…GPFF), 276–300 (AAGD…AQFS), and 552–582 (TGGS…GTGR). A compositionally biased stretch (polar residues) spans 132–141 (PISRNGTNAV). A compositionally biased stretch (low complexity) spans 142 to 171 (NSNQQHSQQHPQQPTNPTNNNFYPTPQTQT). Polar residues-rich tracts occupy residues 172–234 (GSYN…SQNP), 281–300 (PTDS…AQFS), and 552–581 (TGGS…SGTG).

The protein belongs to the ERT1/acuK family.

Its subcellular location is the nucleus. Transcription factor which regulates nonfermentable carbon utilization. Activator of gluconeogenetic genes. The sequence is that of Transcription activator of gluconeogenesis Pc22g08580 from Penicillium rubens (strain ATCC 28089 / DSM 1075 / NRRL 1951 / Wisconsin 54-1255) (Penicillium chrysogenum).